The chain runs to 525 residues: GMP synthase [glutamine-hydrolyzing] (525 aa).

One can recognise a Glutamine amidotransferase type-1 domain in the interval 9–207 (RILILDFGSQ…VRDICQCEAL (199 aa)). Cysteine 86 serves as the catalytic Nucleophile. Catalysis depends on residues histidine 181 and glutamate 183. Residues 208 to 400 (WTPAKIIDDA…LGLPYDMLYR (193 aa)) form the GMPS ATP-PPase domain. 235–241 (SGGVDSS) contributes to the ATP binding site.

As to quaternary structure, homodimer.

It carries out the reaction XMP + L-glutamine + ATP + H2O = GMP + L-glutamate + AMP + diphosphate + 2 H(+). Its pathway is purine metabolism; GMP biosynthesis; GMP from XMP (L-Gln route): step 1/1. Functionally, catalyzes the synthesis of GMP from XMP. In Klebsiella pneumoniae (strain 342), this protein is GMP synthase [glutamine-hydrolyzing].